Consider the following 104-residue polypeptide: N(4)-acetylcytidine amidohydrolase (104 aa).

Positions 6–101 constitute an ASCH domain; sequence TFFERFEHDI…EQLYMIRFKV (96 aa). The active-site Proton acceptor is Lys20. Catalysis depends on Thr23, which acts as the Nucleophile. The Proton donor role is filled by Glu73.

Belongs to the N(4)-acetylcytidine amidohydrolase family.

The catalysed reaction is N(4)-acetylcytidine + H2O = cytidine + acetate + H(+). It catalyses the reaction N(4)-acetyl-2'-deoxycytidine + H2O = 2'-deoxycytidine + acetate + H(+). The enzyme catalyses N(4)-acetylcytosine + H2O = cytosine + acetate + H(+). Functionally, catalyzes the hydrolysis of N(4)-acetylcytidine (ac4C). The protein is N(4)-acetylcytidine amidohydrolase of Shewanella oneidensis (strain ATCC 700550 / JCM 31522 / CIP 106686 / LMG 19005 / NCIMB 14063 / MR-1).